Reading from the N-terminus, the 187-residue chain is MFIIAGLGNPGQEYENTRHNAGFMVVDELAKKHGILITKRKFKSLVGEGEILGVKVLLLKPQTYMNLSGTAVQEAVSFYKLPLSRLVVVYDDLDLPLGKIRLRLKGSAGGHRGMGSIISCLGSEEIPRLKIGIGRPAVGDVKDYVLQPFTGAEREILEPTLKLAAEAITVALTEGFNKAMTDFNRGG.

Residue Tyr14 coordinates tRNA. The active-site Proton acceptor is the His19. Positions 64 and 66 each coordinate tRNA.

Belongs to the PTH family. As to quaternary structure, monomer.

The protein localises to the cytoplasm. It carries out the reaction an N-acyl-L-alpha-aminoacyl-tRNA + H2O = an N-acyl-L-amino acid + a tRNA + H(+). Hydrolyzes ribosome-free peptidyl-tRNAs (with 1 or more amino acids incorporated), which drop off the ribosome during protein synthesis, or as a result of ribosome stalling. Functionally, catalyzes the release of premature peptidyl moieties from peptidyl-tRNA molecules trapped in stalled 50S ribosomal subunits, and thus maintains levels of free tRNAs and 50S ribosomes. The chain is Peptidyl-tRNA hydrolase from Carboxydothermus hydrogenoformans (strain ATCC BAA-161 / DSM 6008 / Z-2901).